The chain runs to 428 residues: Adenylosuccinate synthetase (428 aa).

GTP is bound by residues 12–18 (GDEGKGK) and 40–42 (GHT). The Proton acceptor role is filled by Asp13. Asp13 and Gly40 together coordinate Mg(2+). IMP is bound by residues 13 to 16 (DEGK), 38 to 41 (NAGH), Thr128, Arg142, Gln223, Thr238, and Arg302. The active-site Proton donor is the His41. Residue 298–304 (TTTGRPR) participates in substrate binding. GTP is bound by residues Arg304, 330–332 (SID), and 412–414 (SVG).

This sequence belongs to the adenylosuccinate synthetase family. Homodimer. Mg(2+) is required as a cofactor.

It localises to the cytoplasm. The enzyme catalyses IMP + L-aspartate + GTP = N(6)-(1,2-dicarboxyethyl)-AMP + GDP + phosphate + 2 H(+). The protein operates within purine metabolism; AMP biosynthesis via de novo pathway; AMP from IMP: step 1/2. In terms of biological role, plays an important role in the de novo pathway of purine nucleotide biosynthesis. Catalyzes the first committed step in the biosynthesis of AMP from IMP. In Geobacillus sp. (strain WCH70), this protein is Adenylosuccinate synthetase.